The chain runs to 800 residues: Transcription initiation factor TFIID subunit 5 (800 aa).

A disordered region spans residues 1–74; sequence MAALAEEQTE…KPTVAVSAAA (74 aa). The span at 30–50 shows a compositional bias: gly residues; the sequence is DGAGEGSGGTTNNGPNGGGGN. Residues 92–124 form the LisH domain; sequence HDRQTLLAVLQFLRQSKLREAEEALRREAGLLE. The disordered stretch occupies residues 153 to 189; it reads ASAPGPAAPDPPGTGASGATVVSGSASGPAAPGKVGS. Low complexity predominate over residues 165 to 189; it reads GTGASGATVVSGSASGPAAPGKVGS. An NTD2; involved in homo-dimerization; also involved in TFIID-TFIIF contacts in the RNA Pol II pre-initiation complex (PIC) region spans residues 194-340; sequence DQPDVSAVLS…NIVQEHLYID (147 aa). The segment covering 384–395 has biased composition (acidic residues); sequence VPLDDEDEEGEN. Residues 384–438 are disordered; it reads VPLDDEDEEGENEEGKPKKKKPKKDSIGSKSKKQDPNAPPQNRIPLPELKDSDKL. Residues 407–418 show a composition bias toward basic and acidic residues; it reads KDSIGSKSKKQD. WD repeat units lie at residues 468–507, 541–580, 583–624, 625–666, 667–706, and 709–748; these read NAYQ…LRSV, GHSG…CLVG, GHNY…RIFA, GHLA…RIFT, GHKG…MVGE, and GHTD…EDLE.

This sequence belongs to the WD repeat TAF5 family. As to quaternary structure, homodimer. Component of the TFIID basal transcription factor complex, composed of TATA-box-binding protein TBP, and a number of TBP-associated factors (TAFs), including TAF1, TAF2, TAF3, TAF4, TAF5, TAF6, TAF7, TAF8, TAF9, TAF10, TAF11, TAF12 and TAF13. The TFIID complex structure can be divided into 3 modules TFIID-A, TFIID-B, and TFIID-C. TAF5 forms the TFIID-A module together with TAF3 and TBP, and in TFIID-B with TAF8. Component of the TFTC-HAT complex, at least composed of TAF5L, TAF6L, TADA3L, SUPT3H/SPT3, TAF2, TAF4, TAF5, GCN5L2/GCN5, TAF10 and TRRAP. TBP is not part of the TFTC-HAT complex. Interacts strongly with the histone H4-related TAF6 and the histone H3-related TAF9, as well as a stable complex comprised of both TAF6 and TAF9. Apparently weaker interactions with TBP, TAF1, TAF11, and TAF12, but not TAF7, also have been observed. (Microbial infection) Interacts with SV40 Large T antigen.

It localises to the nucleus. Functionally, the TFIID basal transcription factor complex plays a major role in the initiation of RNA polymerase II (Pol II)-dependent transcription. TFIID recognizes and binds promoters with or without a TATA box via its subunit TBP, a TATA-box-binding protein, and promotes assembly of the pre-initiation complex (PIC). The TFIID complex consists of TBP and TBP-associated factors (TAFs), including TAF1, TAF2, TAF3, TAF4, TAF5, TAF6, TAF7, TAF8, TAF9, TAF10, TAF11, TAF12 and TAF13. The TFIID complex structure can be divided into 3 modules TFIID-A, TFIID-B, and TFIID-C. TAF5 is involved in two modules of TFIID, in TFIID-A together with TAF3 and TBP, and in TFIID-B with TAF8. Involved in contacts between TFIID and TFIIF in the PIC. The protein is Transcription initiation factor TFIID subunit 5 (TAF5) of Homo sapiens (Human).